The following is a 174-amino-acid chain: Dual-action ribosomal maturation protein DarP (174 aa).

This sequence belongs to the DarP family.

The protein localises to the cytoplasm. Functionally, member of a network of 50S ribosomal subunit biogenesis factors which assembles along the 30S-50S interface, preventing incorrect 23S rRNA structures from forming. Promotes peptidyl transferase center (PTC) maturation. In Vibrio campbellii (strain ATCC BAA-1116), this protein is Dual-action ribosomal maturation protein DarP.